We begin with the raw amino-acid sequence, 757 residues long: Endonuclease MutS2 (757 aa).

Residue 321–328 (GPNMGGKT) participates in ATP binding. The 76-residue stretch at 681-756 (IDIRGMTVEE…GTGVTVVEVE (76 aa)) folds into the Smr domain.

This sequence belongs to the DNA mismatch repair MutS family. MutS2 subfamily. As to quaternary structure, homodimer. Binds to stalled ribosomes, contacting rRNA.

Functionally, endonuclease that is involved in the suppression of homologous recombination and thus may have a key role in the control of bacterial genetic diversity. In terms of biological role, acts as a ribosome collision sensor, splitting the ribosome into its 2 subunits. Detects stalled/collided 70S ribosomes which it binds and splits by an ATP-hydrolysis driven conformational change. Acts upstream of the ribosome quality control system (RQC), a ribosome-associated complex that mediates the extraction of incompletely synthesized nascent chains from stalled ribosomes and their subsequent degradation. Probably generates substrates for RQC. In Thermotoga neapolitana (strain ATCC 49049 / DSM 4359 / NBRC 107923 / NS-E), this protein is Endonuclease MutS2.